Consider the following 266-residue polypeptide: Thymidylate synthase (266 aa).

Position 24 (Arg-24) interacts with dUMP. His-54 contributes to the (6R)-5,10-methylene-5,6,7,8-tetrahydrofolate binding site. Arg-129–Arg-130 serves as a coordination point for dUMP. Cys-149 serves as the catalytic Nucleophile. DUMP is bound by residues Arg-169–Asp-172, Asn-180, and His-210–Tyr-212. Asp-172 contacts (6R)-5,10-methylene-5,6,7,8-tetrahydrofolate. A (6R)-5,10-methylene-5,6,7,8-tetrahydrofolate-binding site is contributed by Ala-265.

It belongs to the thymidylate synthase family. Bacterial-type ThyA subfamily. Homodimer.

It is found in the cytoplasm. The catalysed reaction is dUMP + (6R)-5,10-methylene-5,6,7,8-tetrahydrofolate = 7,8-dihydrofolate + dTMP. It functions in the pathway pyrimidine metabolism; dTTP biosynthesis. Catalyzes the reductive methylation of 2'-deoxyuridine-5'-monophosphate (dUMP) to 2'-deoxythymidine-5'-monophosphate (dTMP) while utilizing 5,10-methylenetetrahydrofolate (mTHF) as the methyl donor and reductant in the reaction, yielding dihydrofolate (DHF) as a by-product. This enzymatic reaction provides an intracellular de novo source of dTMP, an essential precursor for DNA biosynthesis. This Mycolicibacterium smegmatis (strain ATCC 700084 / mc(2)155) (Mycobacterium smegmatis) protein is Thymidylate synthase.